A 469-amino-acid chain; its full sequence is Aspartyl/glutamyl-tRNA(Asn/Gln) amidotransferase subunit B (469 aa).

This sequence belongs to the GatB/GatE family. GatB subfamily. Heterotrimer of A, B and C subunits.

It carries out the reaction L-glutamyl-tRNA(Gln) + L-glutamine + ATP + H2O = L-glutaminyl-tRNA(Gln) + L-glutamate + ADP + phosphate + H(+). The catalysed reaction is L-aspartyl-tRNA(Asn) + L-glutamine + ATP + H2O = L-asparaginyl-tRNA(Asn) + L-glutamate + ADP + phosphate + 2 H(+). In terms of biological role, allows the formation of correctly charged Asn-tRNA(Asn) or Gln-tRNA(Gln) through the transamidation of misacylated Asp-tRNA(Asn) or Glu-tRNA(Gln) in organisms which lack either or both of asparaginyl-tRNA or glutaminyl-tRNA synthetases. The reaction takes place in the presence of glutamine and ATP through an activated phospho-Asp-tRNA(Asn) or phospho-Glu-tRNA(Gln). This Methanococcus aeolicus (strain ATCC BAA-1280 / DSM 17508 / OCM 812 / Nankai-3) protein is Aspartyl/glutamyl-tRNA(Asn/Gln) amidotransferase subunit B.